The following is a 518-amino-acid chain: Protein PAC2 (518 aa).

In terms of domain architecture, CAP-Gly spans 23–67 (VIKPWPSVKAYGVEWDDHSRGKHSGTIDDIHYFDVQIPNSGSFLK). LRR repeat units follow at residues 153–174 (NVKD…CEFI), 179–201 (NLES…KEYD), 204–227 (HIKT…LKSF), 229–252 (TLKM…ENEI), 255–276 (TLEE…PKNL), 277–298 (TLKG…AIYS), 299–319 (VESL…DDLN), and 324–345 (SLKN…INVE).

The protein resides in the cytoplasm. Its subcellular location is the cytoskeleton. Functionally, required for viability in the absence of the kinesin-related CIN8 mitotic motor. Seems to be involved in the assembly of alpha-tubulin. The protein is Protein PAC2 (PAC2) of Saccharomyces cerevisiae (strain ATCC 204508 / S288c) (Baker's yeast).